A 392-amino-acid chain; its full sequence is CD2 homolog (392 aa).

The signal sequence occupies residues Met1–Ser16. At Ile17–Tyr222 the chain is on the extracellular side. Residues Asn39, Asn88, Asn92, Asn106, Asn148, Asn159, Asn183, Asn191, Asn198, and Asn204 are each glycosylated (N-linked (GlcNAc...) asparagine; by host). 2 cysteine pairs are disulfide-bonded: Cys137–Cys205 and Cys144–Cys188. Residues Ile223–Ile243 form a helical membrane-spanning segment. Topologically, residues Thr244 to Ile392 are cytoplasmic. A disordered region spans residues Glu258–Lys290. Over residues Gln269 to Pro283 the composition is skewed to basic and acidic residues. 5 tandem repeats follow at residues Lys319–Pro324, Lys325–Pro330, Lys331–Pro336, Lys337–Ser342, and Lys343–Pro348. The 5 X 6 AA tandem repeats of K-P-C-[PRS]-[P]-[PS] stretch occupies residues Lys319–Pro348. The segment at Pro328–Cys357 is disordered.

This sequence belongs to the asfivirus CD2 homolog protein family. In terms of assembly, both glycosylated and nonglycosylated forms interact (via C-terminus) with the host AP-1 complex. Cleaved into two fragments of 63 kDa and 26 kDa containing respectively the glycosylated N-terminus and the nonglycosylated C-terminus. A full-length 89-kDa glycosylated form also exists.

Its subcellular location is the host cell membrane. The protein localises to the virion membrane. It localises to the host Golgi apparatus. May play an immunosuppressive role by inhibiting lymphocyte proliferation and subsequently facilitating viral replication and generalization of infection. Responsible for viral hemadsorption, which may help viral spread. Increases virus replication in the tick vector at the step of virus uptake or replication in the tick gut. May play a role in the host Golgi reorganization to yield viral factories. May play a role in host cell penetration. This is CD2 homolog from Ornithodoros (relapsing fever ticks).